We begin with the raw amino-acid sequence, 210 residues long: Large ribosomal subunit protein uL22 (210 aa).

Positions 123–210 (NEMTSKETVK…TKSTKKEGSK (88 aa)) are disordered. The segment covering 126–157 (TSKETVKEPAKKPSAKVEKPAEAKAPKQETST) has biased composition (basic and acidic residues). A compositionally biased stretch (low complexity) spans 158-185 (KKPTTTTESKPKTSKAPAQKQAAKVAKP).

The protein belongs to the universal ribosomal protein uL22 family. In terms of assembly, part of the 50S ribosomal subunit.

Functionally, this protein binds specifically to 23S rRNA; its binding is stimulated by other ribosomal proteins, e.g. L4, L17, and L20. It is important during the early stages of 50S assembly. It makes multiple contacts with different domains of the 23S rRNA in the assembled 50S subunit and ribosome. The globular domain of the protein is located near the polypeptide exit tunnel on the outside of the subunit, while an extended beta-hairpin is found that lines the wall of the exit tunnel in the center of the 70S ribosome. This Metamycoplasma arthritidis (strain 158L3-1) (Mycoplasma arthritidis) protein is Large ribosomal subunit protein uL22.